The sequence spans 343 residues: L-threonine 3-dehydrogenase (343 aa).

Cys-40 serves as a coordination point for Zn(2+). Residues Thr-42 and His-45 each act as charge relay system in the active site. 6 residues coordinate Zn(2+): His-65, Glu-66, Cys-95, Cys-98, Cys-101, and Cys-109. Residues Ile-177, Asp-197, Arg-202, 264–266 (LGI), and 288–289 (IY) each bind NAD(+).

Belongs to the zinc-containing alcohol dehydrogenase family. Homotetramer. Zn(2+) is required as a cofactor.

The protein resides in the cytoplasm. The catalysed reaction is L-threonine + NAD(+) = (2S)-2-amino-3-oxobutanoate + NADH + H(+). The protein operates within amino-acid degradation; L-threonine degradation via oxydo-reductase pathway; glycine from L-threonine: step 1/2. Functionally, catalyzes the NAD(+)-dependent oxidation of L-threonine to 2-amino-3-ketobutyrate. The polypeptide is L-threonine 3-dehydrogenase (Vibrio atlanticus (strain LGP32) (Vibrio splendidus (strain Mel32))).